We begin with the raw amino-acid sequence, 2803 residues long: Microtubule-associated protein 1A (2803 aa).

Ser114, Ser117, Ser118, Ser121, and Ser155 each carry phosphoserine. A Phosphotyrosine modification is found at Tyr177. Disordered stretches follow at residues Gly302 to Pro466 and Ile486 to Thr516. Residues Ser319, Ser322, and Ser384 each carry the phosphoserine modification. Residues Ala335 to Ala390 are compositionally biased toward basic and acidic residues. Positions Glu391–Lys406 are enriched in basic residues. Composition is skewed to basic and acidic residues over residues Glu407–Leu464 and Ile486–Ser499. 8 tandem repeats follow at residues Lys415–Asp417, Lys420–Glu422, Arg427–Glu429, Lys431–Asp433, Arg436–Glu438, Lys440–Asp442, Lys444–Glu446, and Arg449–Asp451. Residues Lys415–Glu541 form a 9 X 3 AA repeats of K-K-[DE] region. Thr504 bears the Phosphothreonine mark. Phosphoserine occurs at positions 526 and 527. Copy 9 of the repeat occupies Lys539 to Glu541. Composition is skewed to basic and acidic residues over residues Lys539–Leu554 and Gln585–Val596. Disordered regions lie at residues Lys539–Glu712, Tyr734–Glu806, Glu847–Asp1080, Thr1109–Asp1548, and Glu1573–Lys1605. A phosphoserine mark is found at Ser605 and Ser612. At Thr616 the chain carries Phosphothreonine. Residues Trp623–Ser667 show a composition bias toward basic and acidic residues. A phosphoserine mark is found at Ser644, Ser667, and Ser787. Composition is skewed to polar residues over residues Glu847–Glu860 and Thr871–Thr883. 4 positions are modified to phosphoserine: Ser874, Ser877, Ser878, and Ser891. Thr894 is subject to Phosphothreonine. Phosphoserine is present on residues Ser896, Ser900, Ser909, Ser986, Ser996, Ser1004, Ser1013, Ser1019, and Ser1029. Basic and acidic residues predominate over residues Gly1031 to Pro1065. A phosphoserine mark is found at Ser1069, Ser1144, Ser1146, Ser1160, Ser1172, Ser1190, Ser1200, Ser1203, Ser1209, Ser1218, Ser1221, and Ser1264. The segment covering Lys1131–Ser1146 has biased composition (basic and acidic residues). Polar residues predominate over residues Ser1154 to Thr1169. Composition is skewed to polar residues over residues Asp1211–Thr1224 and Ser1264–Asp1278. Residues Pro1289 to Ser1299 show a composition bias toward low complexity. Ser1326, Ser1329, Ser1544, Ser1600, and Ser1626 each carry phosphoserine. Composition is skewed to basic and acidic residues over residues Ile1338–Asp1548 and Gln1586–Lys1605. The segment covering Arg1632–Arg1642 has biased composition (basic and acidic residues). Disordered stretches follow at residues Arg1632–Arg1684, Asp1713–Gly1879, and Glu1892–Gly2673. At Ser1654 the chain carries Phosphoserine. Basic and acidic residues predominate over residues Pro1655 to Glu1666. Phosphoserine occurs at positions 1675, 1749, 1762, 1776, 1791, 1797, 1801, 1812, and 1818. The segment covering Leu1852 to Ala1867 has biased composition (pro residues). A compositionally biased stretch (basic and acidic residues) spans Lys1907–Ser1929. Phosphoserine is present on Ser1931. Residues Pro1951 to Ser1964 show a composition bias toward basic and acidic residues. A Phosphothreonine modification is found at Thr1957. Residues Ser2019–Phe2033 show a composition bias toward polar residues. Ser2022 bears the Phosphoserine mark. The span at Thr2042–Ala2066 shows a compositional bias: pro residues. At Thr2058 the chain carries Phosphothreonine. Residues Ser2074, Ser2104, Ser2106, and Ser2108 each carry the phosphoserine modification. The span at Pro2086 to Ala2122 shows a compositional bias: basic and acidic residues. A compositionally biased stretch (pro residues) spans Pro2175–Ala2184. Ser2235, Ser2252, Ser2256, Ser2259, and Ser2260 each carry phosphoserine. Residues Glu2257–Ile2268 are compositionally biased toward polar residues. Low complexity predominate over residues Ala2312 to Pro2325. Ser2449 bears the Phosphoserine mark. Over residues Ile2461 to Leu2473 the composition is skewed to basic and acidic residues. Low complexity predominate over residues Ser2502 to Asp2514. The span at Asp2559–Pro2575 shows a compositional bias: pro residues. A compositionally biased stretch (basic and acidic residues) spans Gly2590 to Gln2602. Phosphoserine occurs at positions 2649 and 2664.

This sequence belongs to the MAP1 family. In terms of assembly, 3 different light chains, LC1 (a cleavage product of MAP1B), LC2 (a cleavage product of MAP1A) and LC3 (produced by one of the MAP1LC3 genes), can associate with the MAP1A or MAP1B heavy chains. Interacts with TIAM2. Interacts with guanylate kinase-like domain of DLG1, DLG2 and DLG4. Binds to CSNK1D. Interacts with ELAVL4. Post-translationally, phosphorylated by CSNK1D. LC2 is generated from MAP1A by proteolytic processing. In terms of tissue distribution, brain.

It localises to the cytoplasm. The protein resides in the cytoskeleton. Its function is as follows. Structural protein involved in the filamentous cross-bridging between microtubules and other skeletal elements. This is Microtubule-associated protein 1A (MAP1A) from Homo sapiens (Human).